The primary structure comprises 54 residues: uncharacterized protein (54 aa).

The segment at 1-54 (MSKKSTPMTKDAASRIQSSAAKSGGDVSSGSFASRAQSAAAINANNTSNSTGKK) is disordered. The span at 28 to 54 (SSGSFASRAQSAAAINANNTSNSTGKK) shows a compositional bias: low complexity.

This is an uncharacterized protein from Dictyostelium discoideum (Social amoeba).